The primary structure comprises 81 residues: Defensin-like protein 153 (81 aa).

A signal peptide spans 1 to 26; sequence MKNVSQVSVAVLLIFSILVLGIGVQG. Cystine bridges form between Cys-30–Cys-81, Cys-41–Cys-60, Cys-46–Cys-75, and Cys-50–Cys-77.

The protein belongs to the DEFL family.

The protein localises to the secreted. The sequence is that of Defensin-like protein 153 (LCR31) from Arabidopsis thaliana (Mouse-ear cress).